The primary structure comprises 66 residues: Large ribosomal subunit protein bL35 (66 aa).

This sequence belongs to the bacterial ribosomal protein bL35 family.

In Rhodopseudomonas palustris (strain BisB18), this protein is Large ribosomal subunit protein bL35.